Reading from the N-terminus, the 465-residue chain is MMKSRFCPSPTGLMHLGNARTALFNYLFAKSKDGIFLLRIEDTDVERSKETFDLGLQEDLRWLNLEWQEGPGADEGNGPYHQSKRQAIYDDYYQRLEEADQAYPCFCSEEQLRLSRKIQRSAGKPPRYAGTCRSLSAAEIEKKKAEGLQPALRFRVPDDEVVVFADLVRGEQRFQTNDIGDFIIRRANGTSPFMFCNAIDDALMGVSHVLRGEDHLTNTPRQLLILQALELPVPTYAHIALIVGPDGSPLSKRHGSRGIKELRDNGYLPLALTNYLARLGHYYASDELLSLAELAKGFNVESLSKSPVKFNAQQLDYWQKQTVNQLPNDDFWEWAGSELQSQIPTDKADLFLTTVKPNVSFPRDVAYWVNVCFGKTLNLETAQSELLRATGNRYFEEAFEAFKKFGKDLNSVVSHLKEKLNLKGKPLYQPLRIALTGAEHGPELAKLILIMDYETIQNRLQEACQ.

A 'HIGH' region motif is present at residues 8–18 (PSPTGLMHLGN). The short motif at 249-253 (PLSKR) is the 'KMSKS' region element. Lys-252 is a binding site for ATP.

The protein belongs to the class-I aminoacyl-tRNA synthetase family. Glutamate--tRNA ligase type 1 subfamily. As to quaternary structure, monomer.

Its subcellular location is the cytoplasm. The enzyme catalyses tRNA(Glu) + L-glutamate + ATP = L-glutamyl-tRNA(Glu) + AMP + diphosphate. In terms of biological role, catalyzes the attachment of glutamate to tRNA(Glu) in a two-step reaction: glutamate is first activated by ATP to form Glu-AMP and then transferred to the acceptor end of tRNA(Glu). This Coxiella burnetii (strain CbuK_Q154) (Coxiella burnetii (strain Q154)) protein is Glutamate--tRNA ligase 2.